A 190-amino-acid polypeptide reads, in one-letter code: NADH-quinone oxidoreductase subunit B (190 aa).

Residues C39, C40, C104, and C135 each contribute to the [4Fe-4S] cluster site.

Belongs to the complex I 20 kDa subunit family. As to quaternary structure, NDH-1 is composed of 14 different subunits. Subunits NuoB, C, D, E, F, and G constitute the peripheral sector of the complex. It depends on [4Fe-4S] cluster as a cofactor.

Its subcellular location is the cell inner membrane. It carries out the reaction a quinone + NADH + 5 H(+)(in) = a quinol + NAD(+) + 4 H(+)(out). Its function is as follows. NDH-1 shuttles electrons from NADH, via FMN and iron-sulfur (Fe-S) centers, to quinones in the respiratory chain. The immediate electron acceptor for the enzyme in this species is believed to be a menaquinone. Couples the redox reaction to proton translocation (for every two electrons transferred, four hydrogen ions are translocated across the cytoplasmic membrane), and thus conserves the redox energy in a proton gradient. The chain is NADH-quinone oxidoreductase subunit B from Chlorobium phaeobacteroides (strain BS1).